A 168-amino-acid chain; its full sequence is Photosystem I assembly protein Ycf3 (168 aa).

3 TPR repeats span residues 35 to 68 (AFTYYRDGMSAQSEGNYAEALQNYYEAMRLEIDP), 72 to 105 (SYILYNIGLIHTSNGEHTKALEYYFRALERNPFL), and 120 to 153 (GEQAIRQGDSEIAEAWFDQAAEYWKQAIALTPGN).

The protein belongs to the Ycf3 family.

Its subcellular location is the plastid. The protein resides in the chloroplast thylakoid membrane. In terms of biological role, essential for the assembly of the photosystem I (PSI) complex. May act as a chaperone-like factor to guide the assembly of the PSI subunits. The protein is Photosystem I assembly protein Ycf3 of Populus alba (White poplar).